The primary structure comprises 713 residues: Cyclomaltodextrin glucanotransferase (713 aa).

The first 27 residues, 1–27, serve as a signal peptide directing secretion; sequence MKKQVKWLTSVSMSVGIALGAALPVWA. The A1 stretch occupies residues 28 to 165; sequence SPDTSVNNKL…NIKVVMDFAP (138 aa). Ca(2+) is bound by residues Asp54, Asn56, Asn59, Asn60, Gly78, and Asp80. Residue 127 to 128 participates in substrate binding; it reads YW. Asn166 contacts Ca(2+). The tract at residues 166 to 229 is b; the sequence is NHTNPASSTD…NLYDLADINQ (64 aa). His167 lines the substrate pocket. Ile217 is a binding site for Ca(2+). 220-223 is a substrate binding site; sequence NLYD. Asp226 provides a ligand contact to Ca(2+). An A2 region spans residues 230–434; sequence NNNTIDSYLK…LRKSNPALAY (205 aa). Residue Arg254 coordinates substrate. Catalysis depends on Asp256, which acts as the Nucleophile. Position 259-260 (259-260) interacts with substrate; the sequence is KH. His260 is a binding site for Ca(2+). Glu285 serves as the catalytic Proton donor. Positions 355, 399, and 403 each coordinate substrate. The segment at 435–522 is c; it reads GSTTQRWVNS…GTAVWQYTTT (88 aa). Residues 523–609 form a d region; that stretch reads ESSPIIGNVG…SAAFNNFNVL (87 aa). The 81-residue stretch at 526–606 folds into the IPT/TIG domain; sequence PIIGNVGPTM…GTTSAAFNNF (81 aa). The region spanning 608-713 is the CBM20 domain; that stretch reads VLTADQVTVR…VATVTVDWQN (106 aa). An e region spans residues 610–713; sequence TADQVTVRFK…VATVTVDWQN (104 aa).

The protein belongs to the glycosyl hydrolase 13 family. In terms of assembly, monomer. Requires Ca(2+) as cofactor.

The protein resides in the secreted. The enzyme catalyses Cyclizes part of a (1-&gt;4)-alpha-D-glucan chain by formation of a (1-&gt;4)-alpha-D-glucosidic bond.. This is Cyclomaltodextrin glucanotransferase from Paenibacillus macerans (Bacillus macerans).